A 425-amino-acid chain; its full sequence is O-methyltransferase AMT9 (425 aa).

S-adenosyl-L-methionine contacts are provided by residues 257–258, Asp280, 306–307, Arg322, and Arg323; these read GG and DF. His326 functions as the Proton acceptor in the catalytic mechanism.

This sequence belongs to the class I-like SAM-binding methyltransferase superfamily. Cation-independent O-methyltransferase family.

Its pathway is mycotoxin biosynthesis. Functionally, O-methyltransferase; part of the gene clusters that mediate the biosynthesis of AM-toxins, host-selective toxins (HSTs) causing Alternaria blotch on apple, a worldwide distributed disease. AM-toxins are cyclic depsipeptides containing the 3 residues 2-hydroxy-isovaleric acid (2-HIV), dehydroalanine, L-alanine which are common for all 3 AM-toxins I to III. The fourth precursor is L-alpha-amino-methoxyphenyl-valeric acid (L-Amv) for AM-toxin I, L-alpha-amino-phenyl-valeric acid (L-Apv) for AM-toxin II, and L-alpha-amino-hydroxyphenyl-valeric acid (L-Ahv) for AM-toxin III. AM-toxins have two target sites for affecting susceptible apple cells; they cause invagination of the plasma membrane and electrolyte loss and chloroplast disorganization. The non-ribosomal peptide synthetase AMT1 contains 4 catalytic modules and is responsible for activation of each residue in AM-toxin. The aldo-keto reductase AMT2 catalyzes the conversion of 2-keto-isovaleric acid (2-KIV) to 2-hydroxy-isovaleric acid (2-HIV), one of the precursor residues incorporated by AMT1 during AM-toxin biosynthesis, by reduction of its ketone to an alcohol. The cytochrome P450 monooxygenase AMT3 and the thioesterase AMT4 are also important for AM-toxin production, but their exact function within the AM-toxin biosynthesis are not known yet. Up to 21 proteins (including AMT1 to AMT4) are predicted to be involved in AM-toxin biosynthesis since their expression ishighly up-regulated in AM-toxin-producing cultures. The polypeptide is O-methyltransferase AMT9 (Alternaria alternata (Alternaria rot fungus)).